Here is a 527-residue protein sequence, read N- to C-terminus: Bifunctional purine biosynthesis protein PurH (527 aa).

The MGS-like domain occupies 9 to 156 (MARKPIRRAL…KNHPSVAVVT (148 aa)).

This sequence belongs to the PurH family.

The catalysed reaction is (6R)-10-formyltetrahydrofolate + 5-amino-1-(5-phospho-beta-D-ribosyl)imidazole-4-carboxamide = 5-formamido-1-(5-phospho-D-ribosyl)imidazole-4-carboxamide + (6S)-5,6,7,8-tetrahydrofolate. It carries out the reaction IMP + H2O = 5-formamido-1-(5-phospho-D-ribosyl)imidazole-4-carboxamide. It functions in the pathway purine metabolism; IMP biosynthesis via de novo pathway; 5-formamido-1-(5-phospho-D-ribosyl)imidazole-4-carboxamide from 5-amino-1-(5-phospho-D-ribosyl)imidazole-4-carboxamide (10-formyl THF route): step 1/1. Its pathway is purine metabolism; IMP biosynthesis via de novo pathway; IMP from 5-formamido-1-(5-phospho-D-ribosyl)imidazole-4-carboxamide: step 1/1. The protein is Bifunctional purine biosynthesis protein PurH of Mycobacterium leprae (strain Br4923).